A 432-amino-acid polypeptide reads, in one-letter code: Proline--tRNA ligase (432 aa).

This sequence belongs to the class-II aminoacyl-tRNA synthetase family. ProS type 2 subfamily. In terms of assembly, homodimer.

It localises to the cytoplasm. It catalyses the reaction tRNA(Pro) + L-proline + ATP = L-prolyl-tRNA(Pro) + AMP + diphosphate. Catalyzes the attachment of proline to tRNA(Pro) in a two-step reaction: proline is first activated by ATP to form Pro-AMP and then transferred to the acceptor end of tRNA(Pro). This chain is Proline--tRNA ligase, found in Rickettsia prowazekii (strain Madrid E).